We begin with the raw amino-acid sequence, 117 residues long: Ribosome-binding factor A (117 aa).

Belongs to the RbfA family. In terms of assembly, monomer. Binds 30S ribosomal subunits, but not 50S ribosomal subunits or 70S ribosomes.

The protein resides in the cytoplasm. Its function is as follows. One of several proteins that assist in the late maturation steps of the functional core of the 30S ribosomal subunit. Associates with free 30S ribosomal subunits (but not with 30S subunits that are part of 70S ribosomes or polysomes). Required for efficient processing of 16S rRNA. May interact with the 5'-terminal helix region of 16S rRNA. This chain is Ribosome-binding factor A, found in Lacticaseibacillus casei (strain BL23) (Lactobacillus casei).